The sequence spans 336 residues: 2-phospho-L-lactate transferase (336 aa).

Position 49 (D49) interacts with 7,8-didemethyl-8-hydroxy-5-deazariboflavin.

It belongs to the CofD family. In terms of assembly, homodimer. Requires Mg(2+) as cofactor.

It carries out the reaction (2S)-lactyl-2-diphospho-5'-guanosine + 7,8-didemethyl-8-hydroxy-5-deazariboflavin = oxidized coenzyme F420-0 + GMP + H(+). Its pathway is cofactor biosynthesis; coenzyme F420 biosynthesis. Functionally, catalyzes the transfer of the 2-phospholactate moiety from (2S)-lactyl-2-diphospho-5'-guanosine to 7,8-didemethyl-8-hydroxy-5-deazariboflavin (FO) with the formation of oxidized coenzyme F420-0 and GMP. This Halobacterium salinarum (strain ATCC 700922 / JCM 11081 / NRC-1) (Halobacterium halobium) protein is 2-phospho-L-lactate transferase.